A 347-amino-acid chain; its full sequence is D-alanine--D-alanine ligase (347 aa).

The ATP-grasp domain maps to K138 to A339. S171–F226 serves as a coordination point for ATP. Mg(2+) is bound by residues D296, E308, and N310.

Belongs to the D-alanine--D-alanine ligase family. Mg(2+) serves as cofactor. Mn(2+) is required as a cofactor.

The protein localises to the cytoplasm. It carries out the reaction 2 D-alanine + ATP = D-alanyl-D-alanine + ADP + phosphate + H(+). Its pathway is cell wall biogenesis; peptidoglycan biosynthesis. In terms of biological role, cell wall formation. This chain is D-alanine--D-alanine ligase, found in Tropheryma whipplei (strain Twist) (Whipple's bacillus).